The chain runs to 297 residues: Mitochondrial glycine transporter (297 aa).

Solcar repeat units follow at residues 5–81 (TGHL…MRTA), 105–189 (LSMY…LKHT), and 211–295 (TSTA…LIKH). 6 helical membrane passes run 8–33 (LIGGFAGGLSSAVALQPLDLLKTRFQ), 56–82 (GTLPSAIRTSVGSALYLSSLNLMRTAL), 111–136 (LVTGAFARGTVGYITMPITIIKVRYE), 164–187 (GFGPTCLRDAPYSGLYVLLYEKLK), 215–241 (INSTSAILSASMATTVTAPFDTIKTRM), and 270–288 (GLSMRLTRKALSAGIAWGI).

Belongs to the mitochondrial carrier (TC 2.A.29) family. SLC25A38 subfamily.

The protein resides in the mitochondrion inner membrane. It carries out the reaction glycine(in) = glycine(out). Its function is as follows. Mitochondrial glycine transporter that imports glycine into the mitochondrial matrix. Plays an important role in providing glycine for the first enzymatic step in heme biosynthesis, the condensation of glycine with succinyl-CoA to produce 5-aminolevulinate (ALA) in the mitochondrial matrix. The protein is Mitochondrial glycine transporter of Candida glabrata (strain ATCC 2001 / BCRC 20586 / JCM 3761 / NBRC 0622 / NRRL Y-65 / CBS 138) (Yeast).